We begin with the raw amino-acid sequence, 129 residues long: MKTAQFYIFFFCWKAIWCNGCVLTNITISVEREECEFCISINTTWCSGYCHTRDLVYKEPIRPNIQKACTFREFVYETMSLPGCANQADSLYSYPVATACHCGSCDTDSTDCTVRGLGPSYCSFNERKE.

The signal sequence occupies residues 1–20 (MKTAQFYIFFFCWKAIWCNG). Disulfide bonds link Cys-21–Cys-69, Cys-35–Cys-84, Cys-38–Cys-122, Cys-46–Cys-100, Cys-50–Cys-102, and Cys-105–Cys-112. 2 N-linked (GlcNAc...) asparagine glycosylation sites follow: Asn-25 and Asn-42.

The protein belongs to the glycoprotein hormones subunit beta family. As to quaternary structure, heterodimer. The active follitropin is a heterodimer composed of an alpha chain/CGA shared with other hormones and a unique beta chain/FSHB shown here.

It localises to the secreted. Its function is as follows. Together with the alpha chain CGA constitutes follitropin, the follicle-stimulating hormone, and provides its biological specificity to the hormone heterodimer. Binds FSHR, a G protein-coupled receptor, on target cells to activate downstream signaling pathways. Follitropin is involved in follicle development and spermatogenesis in reproductive organs. This is Follitropin subunit beta (FSHB) from Monodelphis domestica (Gray short-tailed opossum).